Consider the following 441-residue polypeptide: Probable tRNA pseudouridine synthase D (441 aa).

Catalysis depends on Asp89, which acts as the Nucleophile. The region spanning 168 to 393 (GVPNFFGVQR…SKGTRREVLL (226 aa)) is the TRUD domain.

This sequence belongs to the pseudouridine synthase TruD family.

It carries out the reaction uridine(13) in tRNA = pseudouridine(13) in tRNA. Functionally, could be responsible for synthesis of pseudouridine from uracil-13 in transfer RNAs. This is Probable tRNA pseudouridine synthase D from Methanosarcina acetivorans (strain ATCC 35395 / DSM 2834 / JCM 12185 / C2A).